The sequence spans 386 residues: Succinate--CoA ligase [ADP-forming] subunit beta (386 aa).

An ATP-grasp domain is found at 9–244 (KELLRQYGVA…LDEEDPKEIE (236 aa)). ATP contacts are provided by residues Lys46, 53-55 (GRG), Glu99, Cys102, and Glu107. 2 residues coordinate Mg(2+): Asn199 and Asp213. Substrate-binding positions include Asn264 and 321–323 (GIM).

The protein belongs to the succinate/malate CoA ligase beta subunit family. Heterotetramer of two alpha and two beta subunits. Mg(2+) serves as cofactor.

The catalysed reaction is succinate + ATP + CoA = succinyl-CoA + ADP + phosphate. It catalyses the reaction GTP + succinate + CoA = succinyl-CoA + GDP + phosphate. It participates in carbohydrate metabolism; tricarboxylic acid cycle; succinate from succinyl-CoA (ligase route): step 1/1. In terms of biological role, succinyl-CoA synthetase functions in the citric acid cycle (TCA), coupling the hydrolysis of succinyl-CoA to the synthesis of either ATP or GTP and thus represents the only step of substrate-level phosphorylation in the TCA. The beta subunit provides nucleotide specificity of the enzyme and binds the substrate succinate, while the binding sites for coenzyme A and phosphate are found in the alpha subunit. The chain is Succinate--CoA ligase [ADP-forming] subunit beta from Halalkalibacterium halodurans (strain ATCC BAA-125 / DSM 18197 / FERM 7344 / JCM 9153 / C-125) (Bacillus halodurans).